A 303-amino-acid chain; its full sequence is N-acetyl-D-glucosamine kinase (303 aa).

ATP-binding positions include 4–11 and 133–140; these read GFDIGGTK and GVGGGLIF. Zn(2+)-binding residues include His-157, Cys-177, Cys-179, and Cys-184.

It belongs to the ROK (NagC/XylR) family. NagK subfamily.

The catalysed reaction is N-acetyl-D-glucosamine + ATP = N-acetyl-D-glucosamine 6-phosphate + ADP + H(+). It functions in the pathway cell wall biogenesis; peptidoglycan recycling. Its function is as follows. Catalyzes the phosphorylation of N-acetyl-D-glucosamine (GlcNAc) derived from cell-wall degradation, yielding GlcNAc-6-P. The sequence is that of N-acetyl-D-glucosamine kinase from Escherichia coli O157:H7.